The following is a 453-amino-acid chain: Homeobox protein meis3 (453 aa).

The segment at 33–64 (HHSLSQSAPYGSTGAAHRVPMPPGMGSNDGLK) is disordered. Residues 102 to 185 (GGDVCSSDSF…PIDLVIDDRD (84 aa)) enclose the MEIS N-terminal domain. Residues 192-272 (LEDFTGSCTS…RDKKRNKKRG (81 aa)) are disordered. The span at 197–209 (GSCTSLSDQNNSW) shows a compositional bias: polar residues. The span at 218 to 230 (STHSGTPGPSSGG) shows a compositional bias: low complexity. The span at 231-242 (LASQSGDNSSEQ) shows a compositional bias: polar residues. The segment at residues 267–329 (RNKKRGIFPK…NARRRIVQPM (63 aa)) is a DNA-binding region (homeobox).

It belongs to the TALE/MEIS homeobox family.

It is found in the nucleus. In terms of biological role, a caudalizing protein which is required to pattern the anterior/posterior (A/P) axis during central nervous system (CNS) formation. Inhibits anterior neural expression and acts as a transcriptional activator to induce posterior neural gene expression. Maintains a proper A/P balance required for hindbrain formation by activating the FGF/MAPK pathway, which modulates the planar cell polarity (PCP) pathway. Interacts with retinoid signaling during hindbrain patterning. In Xenopus tropicalis (Western clawed frog), this protein is Homeobox protein meis3.